Reading from the N-terminus, the 452-residue chain is UDP-N-acetylmuramoylalanine--D-glutamate ligase (452 aa).

119–125 (GSNGKTT) is a binding site for ATP.

This sequence belongs to the MurCDEF family.

The protein resides in the cytoplasm. It catalyses the reaction UDP-N-acetyl-alpha-D-muramoyl-L-alanine + D-glutamate + ATP = UDP-N-acetyl-alpha-D-muramoyl-L-alanyl-D-glutamate + ADP + phosphate + H(+). The protein operates within cell wall biogenesis; peptidoglycan biosynthesis. In terms of biological role, cell wall formation. Catalyzes the addition of glutamate to the nucleotide precursor UDP-N-acetylmuramoyl-L-alanine (UMA). In Streptococcus pyogenes serotype M4 (strain MGAS10750), this protein is UDP-N-acetylmuramoylalanine--D-glutamate ligase.